A 159-amino-acid chain; its full sequence is Protein-export protein SecB (159 aa).

The protein belongs to the SecB family. Homotetramer, a dimer of dimers. One homotetramer interacts with 1 SecA dimer.

It localises to the cytoplasm. In terms of biological role, one of the proteins required for the normal export of preproteins out of the cell cytoplasm. It is a molecular chaperone that binds to a subset of precursor proteins, maintaining them in a translocation-competent state. It also specifically binds to its receptor SecA. The chain is Protein-export protein SecB from Burkholderia vietnamiensis (strain G4 / LMG 22486) (Burkholderia cepacia (strain R1808)).